The primary structure comprises 374 residues: Agmatine deiminase (374 aa).

Residues D220 and D226 each coordinate agmatine. C366 acts as the Amidino-cysteine intermediate in catalysis.

The protein belongs to the agmatine deiminase family. As to quaternary structure, forms homodimers.

It catalyses the reaction agmatine + H2O = N-carbamoylputrescine + NH4(+). It functions in the pathway amine and polyamine biosynthesis; putrescine biosynthesis via agmatine pathway; N-carbamoylputrescine from agmatine: step 1/1. Functionally, mediates the hydrolysis of agmatine into N-carbamoylputrescine in the arginine decarboxylase (ADC) pathway of putrescine biosynthesis, a basic polyamine. The sequence is that of Agmatine deiminase from Medicago truncatula (Barrel medic).